A 188-amino-acid polypeptide reads, in one-letter code: Elongation factor P-like protein (188 aa).

The protein belongs to the elongation factor P family.

This is Elongation factor P-like protein from Vibrio parahaemolyticus serotype O3:K6 (strain RIMD 2210633).